The sequence spans 1009 residues: Lateral signaling target protein 2 homolog (1009 aa).

3 disordered regions span residues 313–460, 497–629, and 777–905; these read PVGS…EEQL, ASED…KRCS, and MQRN…TATA. Low complexity-rich tracts occupy residues 327–348, 364–398, and 406–427; these read SSTP…SSSG, QRNN…TPTA, and PSHS…HPPA. A compositionally biased stretch (acidic residues) spans 430–458; it reads SDGDDEDEDEEEDEEEDELEDTEDDTDEE. S541 is subject to Phosphoserine. Basic and acidic residues predominate over residues 544–558; sequence SEPHRDQGETIKSTE. A compositionally biased stretch (low complexity) spans 562-575; the sequence is QQQQQQEQQTLQSS. Composition is skewed to basic residues over residues 576–601 and 609–627; these read RQRH…HHST and QPHH…GRKR. Low complexity predominate over residues 780–798; sequence NNTIDNPSSSNTSSSSATT. S807 bears the Phosphoserine mark. Low complexity predominate over residues 822 to 878; that stretch reads VHQQEQEMQQQQDHQQQQHQHQVQVQLQRQRNNSVGSNTPSSASSTSSSSEQNSPVS. The FYVE-type zinc-finger motif lies at 917–977; the sequence is DGKAPRCMSC…VCRDCYVREV (61 aa). Residues C923, C926, C939, C942, C947, C950, C969, and C972 each coordinate Zn(2+).

Belongs to the lst-2 family.

Functionally, negative regulator of epidermal growth factor receptor (EGFR) signaling. The sequence is that of Lateral signaling target protein 2 homolog from Drosophila persimilis (Fruit fly).